A 377-amino-acid chain; its full sequence is Lipoyl synthase, mitochondrial (377 aa).

7 residues coordinate [4Fe-4S] cluster: Cys103, Cys108, Cys114, Cys134, Cys138, Cys141, and Ser349. The 220-residue stretch at 119–338 (EHGTQTATIM…EERGNELGFL (220 aa)) folds into the Radical SAM core domain.

The protein belongs to the radical SAM superfamily. Lipoyl synthase family. The cofactor is [4Fe-4S] cluster.

It is found in the mitochondrion. The enzyme catalyses [[Fe-S] cluster scaffold protein carrying a second [4Fe-4S](2+) cluster] + N(6)-octanoyl-L-lysyl-[protein] + 2 oxidized [2Fe-2S]-[ferredoxin] + 2 S-adenosyl-L-methionine + 4 H(+) = [[Fe-S] cluster scaffold protein] + N(6)-[(R)-dihydrolipoyl]-L-lysyl-[protein] + 4 Fe(3+) + 2 hydrogen sulfide + 2 5'-deoxyadenosine + 2 L-methionine + 2 reduced [2Fe-2S]-[ferredoxin]. Its pathway is protein modification; protein lipoylation via endogenous pathway; protein N(6)-(lipoyl)lysine from octanoyl-[acyl-carrier-protein]: step 2/2. Catalyzes the radical-mediated insertion of two sulfur atoms into the C-6 and C-8 positions of the octanoyl moiety bound to the lipoyl domains of lipoate-dependent enzymes, thereby converting the octanoylated domains into lipoylated derivatives. This is Lipoyl synthase, mitochondrial from Drosophila sechellia (Fruit fly).